A 311-amino-acid polypeptide reads, in one-letter code: Bifunctional protein FolD (311 aa).

Residue 174-176 (GKG) coordinates NADP(+).

Belongs to the tetrahydrofolate dehydrogenase/cyclohydrolase family. In terms of assembly, homodimer.

The enzyme catalyses (6R)-5,10-methylene-5,6,7,8-tetrahydrofolate + NADP(+) = (6R)-5,10-methenyltetrahydrofolate + NADPH. It catalyses the reaction (6R)-5,10-methenyltetrahydrofolate + H2O = (6R)-10-formyltetrahydrofolate + H(+). Its pathway is one-carbon metabolism; tetrahydrofolate interconversion. Functionally, catalyzes the oxidation of 5,10-methylenetetrahydrofolate to 5,10-methenyltetrahydrofolate and then the hydrolysis of 5,10-methenyltetrahydrofolate to 10-formyltetrahydrofolate. In Pyrobaculum arsenaticum (strain DSM 13514 / JCM 11321 / PZ6), this protein is Bifunctional protein FolD.